Reading from the N-terminus, the 486-residue chain is tRNA sulfurtransferase (486 aa).

In terms of domain architecture, THUMP spans 61 to 165; that stretch reads AILIDVLGRI…NDHMMLIKAR (105 aa). ATP contacts are provided by residues 183 to 184, K265, G287, and Q296; that span reads LI. A disulfide bridge links C344 with C456. In terms of domain architecture, Rhodanese spans 404 to 481; sequence LSANDVILDI…NGFANVRVFA (78 aa). Residue C456 is the Cysteine persulfide intermediate of the active site.

Belongs to the ThiI family.

The protein resides in the cytoplasm. The enzyme catalyses [ThiI sulfur-carrier protein]-S-sulfanyl-L-cysteine + a uridine in tRNA + 2 reduced [2Fe-2S]-[ferredoxin] + ATP + H(+) = [ThiI sulfur-carrier protein]-L-cysteine + a 4-thiouridine in tRNA + 2 oxidized [2Fe-2S]-[ferredoxin] + AMP + diphosphate. The catalysed reaction is [ThiS sulfur-carrier protein]-C-terminal Gly-Gly-AMP + S-sulfanyl-L-cysteinyl-[cysteine desulfurase] + AH2 = [ThiS sulfur-carrier protein]-C-terminal-Gly-aminoethanethioate + L-cysteinyl-[cysteine desulfurase] + A + AMP + 2 H(+). Its pathway is cofactor biosynthesis; thiamine diphosphate biosynthesis. In terms of biological role, catalyzes the ATP-dependent transfer of a sulfur to tRNA to produce 4-thiouridine in position 8 of tRNAs, which functions as a near-UV photosensor. Also catalyzes the transfer of sulfur to the sulfur carrier protein ThiS, forming ThiS-thiocarboxylate. This is a step in the synthesis of thiazole, in the thiamine biosynthesis pathway. The sulfur is donated as persulfide by IscS. This Mannheimia succiniciproducens (strain KCTC 0769BP / MBEL55E) protein is tRNA sulfurtransferase.